A 78-amino-acid chain; its full sequence is Translation initiation factor IF-1 (78 aa).

One can recognise an S1-like domain in the interval 2–78 (SKNNLNETES…TRARITYRFK (77 aa)).

It belongs to the IF-1 family. As to quaternary structure, component of the 30S ribosomal translation pre-initiation complex which assembles on the 30S ribosome in the order IF-2 and IF-3, IF-1 and N-formylmethionyl-tRNA(fMet); mRNA recruitment can occur at any time during PIC assembly.

It localises to the cytoplasm. In terms of biological role, one of the essential components for the initiation of protein synthesis. Stabilizes the binding of IF-2 and IF-3 on the 30S subunit to which N-formylmethionyl-tRNA(fMet) subsequently binds. Helps modulate mRNA selection, yielding the 30S pre-initiation complex (PIC). Upon addition of the 50S ribosomal subunit IF-1, IF-2 and IF-3 are released leaving the mature 70S translation initiation complex. The sequence is that of Translation initiation factor IF-1 from Onion yellows phytoplasma (strain OY-M).